A 77-amino-acid chain; its full sequence is Probable Fe(2+)-trafficking protein (77 aa).

It belongs to the Fe(2+)-trafficking protein family.

Functionally, could be a mediator in iron transactions between iron acquisition and iron-requiring processes, such as synthesis and/or repair of Fe-S clusters in biosynthetic enzymes. The chain is Probable Fe(2+)-trafficking protein from Baumannia cicadellinicola subsp. Homalodisca coagulata.